Consider the following 583-residue polypeptide: Chitinase 2 (583 aa).

Positions 1–19 are cleaved as a signal peptide; that stretch reads MLSFKSLLAAAVVASSALA. Residues 23 to 305 enclose the GH18 domain; it reads NQVALYWGQN…VQVKNVLNQN (283 aa). The active-site Proton donor is E153. 3 N-linked (GlcNAc...) asparagine glycosylation sites follow: N370, N546, and N549. Residue G560 is the site of GPI-anchor amidated glycine attachment. Positions 561 to 583 are cleaved as a propeptide — removed in mature form; sequence AAVANSLNSVWFTVPFLLAAFAF.

This sequence belongs to the glycosyl hydrolase 18 family. Chitinase class III subfamily. In terms of processing, the GPI-anchor is attached to the protein in the endoplasmic reticulum and serves to target the protein to the cell surface. There, the glucosamine-inositol phospholipid moiety is cleaved off and the GPI-modified mannoprotein is covalently attached via its lipidless GPI glycan remnant to the 1,6-beta-glucan of the outer cell wall layer. Proteolytic cleavage by SAP9 and SAP10 leads to the cell wall release of CHT2 and increased chitinase activity, suggesting a direct influence of SAP9 and SAP10 on CHT2 function.

The protein resides in the secreted. The protein localises to the cell wall. Its subcellular location is the membrane. It catalyses the reaction Random endo-hydrolysis of N-acetyl-beta-D-glucosaminide (1-&gt;4)-beta-linkages in chitin and chitodextrins.. Its function is as follows. Chitinase involved in the remodeling of chitin in the fungal cell wall. Plays a role in cell separation. The sequence is that of Chitinase 2 (CHT2) from Candida albicans (strain SC5314 / ATCC MYA-2876) (Yeast).